Here is a 297-residue protein sequence, read N- to C-terminus: Elongation factor Ts (297 aa).

Residues 82–85 (TDFV) are involved in Mg(2+) ion dislocation from EF-Tu. Over residues 223-265 (AQTAAAAETAPPEVSEPEPAAAVTAEEPTPEPVAAAEQPAEPV) the composition is skewed to low complexity. The tract at residues 223-297 (AQTAAAAETA…GKSRSNKKKK (75 aa)) is disordered. Positions 286-297 (SGGKSRSNKKKK) are enriched in basic residues.

It belongs to the EF-Ts family.

It localises to the cytoplasm. Its function is as follows. Associates with the EF-Tu.GDP complex and induces the exchange of GDP to GTP. It remains bound to the aminoacyl-tRNA.EF-Tu.GTP complex up to the GTP hydrolysis stage on the ribosome. In Thermosynechococcus vestitus (strain NIES-2133 / IAM M-273 / BP-1), this protein is Elongation factor Ts.